Reading from the N-terminus, the 345-residue chain is Uroporphyrinogen decarboxylase (345 aa).

Residues 28 to 32 (RQAGR), D77, Y152, S207, and H321 each bind substrate.

The protein belongs to the uroporphyrinogen decarboxylase family. Homodimer.

Its subcellular location is the cytoplasm. The enzyme catalyses uroporphyrinogen III + 4 H(+) = coproporphyrinogen III + 4 CO2. It functions in the pathway porphyrin-containing compound metabolism; protoporphyrin-IX biosynthesis; coproporphyrinogen-III from 5-aminolevulinate: step 4/4. In terms of biological role, catalyzes the decarboxylation of four acetate groups of uroporphyrinogen-III to yield coproporphyrinogen-III. The sequence is that of Uroporphyrinogen decarboxylase from Arthrobacter sp. (strain FB24).